A 145-amino-acid chain; its full sequence is Deoxyuridine 5'-triphosphate nucleotidohydrolase (145 aa).

Residues 62-64 (RSG), Asn-75, 79-81 (TVD), and Lys-89 contribute to the substrate site.

The protein belongs to the dUTPase family. Mg(2+) is required as a cofactor.

It catalyses the reaction dUTP + H2O = dUMP + diphosphate + H(+). The protein operates within pyrimidine metabolism; dUMP biosynthesis; dUMP from dCTP (dUTP route): step 2/2. Functionally, this enzyme is involved in nucleotide metabolism: it produces dUMP, the immediate precursor of thymidine nucleotides and it decreases the intracellular concentration of dUTP so that uracil cannot be incorporated into DNA. The chain is Deoxyuridine 5'-triphosphate nucleotidohydrolase from Helicobacter pylori (strain P12).